Reading from the N-terminus, the 273-residue chain is 4-hydroxy-tetrahydrodipicolinate reductase (273 aa).

NAD(+) is bound by residues 12-17 and E38; that span reads GAGGRM. R39 lines the NADP(+) pocket. NAD(+) contacts are provided by residues 102–104 and 126–129; these read GTT and AANF. H159 acts as the Proton donor/acceptor in catalysis. A (S)-2,3,4,5-tetrahydrodipicolinate-binding site is contributed by H160. K163 acts as the Proton donor in catalysis. Residue 169–170 coordinates (S)-2,3,4,5-tetrahydrodipicolinate; it reads GT.

The protein belongs to the DapB family. As to quaternary structure, homotetramer.

Its subcellular location is the cytoplasm. The enzyme catalyses (S)-2,3,4,5-tetrahydrodipicolinate + NAD(+) + H2O = (2S,4S)-4-hydroxy-2,3,4,5-tetrahydrodipicolinate + NADH + H(+). It catalyses the reaction (S)-2,3,4,5-tetrahydrodipicolinate + NADP(+) + H2O = (2S,4S)-4-hydroxy-2,3,4,5-tetrahydrodipicolinate + NADPH + H(+). The protein operates within amino-acid biosynthesis; L-lysine biosynthesis via DAP pathway; (S)-tetrahydrodipicolinate from L-aspartate: step 4/4. Its function is as follows. Catalyzes the conversion of 4-hydroxy-tetrahydrodipicolinate (HTPA) to tetrahydrodipicolinate. The sequence is that of 4-hydroxy-tetrahydrodipicolinate reductase from Escherichia fergusonii (strain ATCC 35469 / DSM 13698 / CCUG 18766 / IAM 14443 / JCM 21226 / LMG 7866 / NBRC 102419 / NCTC 12128 / CDC 0568-73).